The following is a 475-amino-acid chain: Ribulose bisphosphate carboxylase large chain (475 aa).

A propeptide spanning residues 1–2 is cleaved from the precursor; that stretch reads MS. N-acetylproline is present on proline 3. Lysine 14 is subject to N6,N6,N6-trimethyllysine. Positions 123 and 173 each coordinate substrate. Residue lysine 175 is the Proton acceptor of the active site. Substrate is bound at residue lysine 177. The Mg(2+) site is built by lysine 201, aspartate 203, and glutamate 204. Position 201 is an N6-carboxylysine (lysine 201). Catalysis depends on histidine 294, which acts as the Proton acceptor. Substrate is bound by residues arginine 295, histidine 327, and serine 379.

This sequence belongs to the RuBisCO large chain family. Type I subfamily. In terms of assembly, heterohexadecamer of 8 large chains and 8 small chains; disulfide-linked. The disulfide link is formed within the large subunit homodimers. It depends on Mg(2+) as a cofactor. In terms of processing, the disulfide bond which can form in the large chain dimeric partners within the hexadecamer appears to be associated with oxidative stress and protein turnover.

It is found in the plastid. Its subcellular location is the chloroplast. It carries out the reaction 2 (2R)-3-phosphoglycerate + 2 H(+) = D-ribulose 1,5-bisphosphate + CO2 + H2O. The enzyme catalyses D-ribulose 1,5-bisphosphate + O2 = 2-phosphoglycolate + (2R)-3-phosphoglycerate + 2 H(+). Its function is as follows. RuBisCO catalyzes two reactions: the carboxylation of D-ribulose 1,5-bisphosphate, the primary event in carbon dioxide fixation, as well as the oxidative fragmentation of the pentose substrate in the photorespiration process. Both reactions occur simultaneously and in competition at the same active site. In Pseudolarix amabilis (Golden larch), this protein is Ribulose bisphosphate carboxylase large chain.